We begin with the raw amino-acid sequence, 515 residues long: MPKERRSRRRPQPIIRWVSLTLTLLALCRPIQTWRCSLSLGNQQWMTAYNQEAKFSISIDQILEAHNQSPFCAKSPRYTLDSVNGYPKIYWPPPQGRRRFGARAMVTYDCEPRCPYVGADRFDCPHWDNASQADQGSFYVNHQILFLHLKQCHGIFTLTWEIWGYDPLITFSLHKIPDPPQPDFPQLNSDWVPSVRSWALLLNQTARAFPDCAICWEPSPPWAPEILVYNKTISSSGPGLALPDAQIFWVNSSSFNTTQGWHHPSQRLLFNVSQGNALLLPPISLVNLSTASSAPPTRVRRSPVAALTLGLALSVGLTGINVAVSALSHQRLTSLIHVLEQDQQRLITAINQTHYNLLNVASVVAQNRRGLDWLYIRLGFQSLCPTINEPCCFLRIQNDSIILRGDLQPLSQRVSTDWQWPWNWDLGLTAWVRETIHSVLSLFLLALFLLFLAPCLIKCLTSRLLKLLRQAPHFPEISLTPKPDSDYQALLPSAPEIYSHLSPVKPDYINLRPCP.

Positions 1–33 are cleaved as a signal peptide; sequence MPKERRSRRRPQPIIRWVSLTLTLLALCRPIQT. Over 34–435 the chain is Extracellular; that stretch reads WRCSLSLGNQ…LGLTAWVRET (402 aa). Residues Asn129 and Asn203 are each glycosylated (N-linked (GlcNAc...) asparagine; by host). Positions 212–215 match the CXXC motif; sequence CAIC. Intrachain disulfides connect Cys212–Cys215, Cys212–Cys392, and Cys384–Cys391. N-linked (GlcNAc...) asparagine; by host glycosylation is found at Asn230, Asn251, Asn256, Asn271, and Asn287. A fusion peptide region spans residues 304–324; the sequence is VAALTLGLALSVGLTGINVAV. Coiled coils occupy residues 330 to 376 and 388 to 420; these read QRLT…WLYI and NEPC…DWQW. A glycan (N-linked (GlcNAc...) asparagine; by host) is linked at Asn351. The interval 365–381 is immunosuppression; that stretch reads AQNRRGLDWLYIRLGFQ. The CX6CC signature appears at 384–392; it reads CPTINEPCC. An N-linked (GlcNAc...) asparagine; by host glycan is attached at Asn398. The chain crosses the membrane as a helical span at residues 436–456; sequence IHSVLSLFLLALFLLFLAPCL. Cys455 carries the S-palmitoyl cysteine; by host lipid modification. Residues 457–515 lie on the Cytoplasmic side of the membrane; the sequence is IKCLTSRLLKLLRQAPHFPEISLTPKPDSDYQALLPSAPEIYSHLSPVKPDYINLRPCP.

As to quaternary structure, the mature envelope protein (Env) consists of a trimer of SU-TM heterodimers attached by a labile interchain disulfide bond. Specific enzymatic cleavages in vivo yield mature proteins. Envelope glycoproteins are synthesized as an inactive precursor that is N-glycosylated and processed likely by host cell furin or by a furin-like protease in the Golgi to yield the mature SU and TM proteins. The cleavage site between SU and TM requires the minimal sequence [KR]-X-[KR]-R. In terms of processing, the CXXC motif is highly conserved across a broad range of retroviral envelope proteins. It is thought to participate in the formation of a labile disulfide bond possibly with the CX6CC motif present in the transmembrane protein. Isomerization of the intersubunit disulfide bond to an SU intrachain disulfide bond is thought to occur upon receptor recognition in order to allow membrane fusion. Post-translationally, the transmembrane protein is palmitoylated.

The protein localises to the virion membrane. Its subcellular location is the host cell membrane. Functionally, the surface protein (SU) attaches the virus to the host cell by binding to its receptor. This interaction triggers the refolding of the transmembrane protein (TM) and is thought to activate its fusogenic potential by unmasking its fusion peptide. Fusion occurs at the host cell plasma membrane. In terms of biological role, the transmembrane protein (TM) acts as a class I viral fusion protein. Under the current model, the protein has at least 3 conformational states: pre-fusion native state, pre-hairpin intermediate state, and post-fusion hairpin state. During viral and target cell membrane fusion, the coiled coil regions (heptad repeats) assume a trimer-of-hairpins structure, positioning the fusion peptide in close proximity to the C-terminal region of the ectodomain. The formation of this structure appears to drive apposition and subsequent fusion of viral and target cell membranes. Membranes fusion leads to delivery of the nucleocapsid into the cytoplasm. The polypeptide is Envelope glycoprotein (env) (Bos taurus (Bovine)).